A 282-amino-acid polypeptide reads, in one-letter code: Putative polysaccharide deacetylase YheN (282 aa).

Residues 15-35 form a helical membrane-spanning segment; sequence LAFKFASLAVLCVLLLLMVIL. The region spanning 85–271 is the NodB homology domain; that stretch reads KTVYLTFDDG…KLKEKGYSFG (187 aa).

The protein belongs to the polysaccharide deacetylase family.

It is found in the cell membrane. This chain is Putative polysaccharide deacetylase YheN (yheN), found in Bacillus subtilis (strain 168).